The chain runs to 329 residues: Mitochondrial nuclease (329 aa).

The active-site Proton acceptor is His-138. Asn-170 is a Mg(2+) binding site.

The protein belongs to the DNA/RNA non-specific endonuclease family. As to quaternary structure, homodimer. Requires Mn(2+) as cofactor. Mg(2+) is required as a cofactor.

Its subcellular location is the mitochondrion inner membrane. Its function is as follows. This enzyme has both RNase and DNase activity. The sequence is that of Mitochondrial nuclease (NUC1) from Saccharomyces cerevisiae (strain ATCC 204508 / S288c) (Baker's yeast).